Here is a 361-residue protein sequence, read N- to C-terminus: Peptide chain release factor 1 (361 aa).

Position 235 is an N5-methylglutamine (Gln-235).

It belongs to the prokaryotic/mitochondrial release factor family. Methylated by PrmC. Methylation increases the termination efficiency of RF1.

Its subcellular location is the cytoplasm. Peptide chain release factor 1 directs the termination of translation in response to the peptide chain termination codons UAG and UAA. The protein is Peptide chain release factor 1 of Rhodopseudomonas palustris (strain BisB18).